Reading from the N-terminus, the 128-residue chain is MDGGLCFDSWSDYLGLSSLISRGLQPRGEGENPSPRWNVSCPAPAEPLPSKEPEGRGYKGCGFCRSNKEAMSLYSSHRLRSLDGRVLCPVLRGYTCPLCGANGDWAHTMRYCPLRQLLRNPQSPRNGQ.

An essential for its translational repressor activity region spans residues 7–23 (FDSWSDYLGLSSLISRG). The tract at residues 23–56 (GLQPRGEGENPSPRWNVSCPAPAEPLPSKEPEGR) is disordered. Residues 60 to 114 (GCGFCRSNKEAMSLYSSHRLRSLDGRVLCPVLRGYTCPLCGANGDWAHTMRYCPL) form a Nanos-type zinc finger. The Zn(2+) site is built by Cys61, Cys64, His77, Cys88, Cys96, Cys99, His107, and Cys112. Short sequence motifs (C2HC) lie at residues 61–88 (CGFC…RVLC) and 96–112 (CPLC…MRYC).

It belongs to the nanos family. Interacts with ccnb1.

Its subcellular location is the cytoplasm. The protein resides in the perinuclear region. Functionally, acts as a translational repressor. Can mediate repression affecting different steps in the translation process: cap-driven, IRES-driven, polyadenylated RNAs or nonpolyadenylated RNAs. Essential for the development of primordial germ cells (PGCs) by ensuring their proper migration and survival. This is Nanos homolog 1 (nanos1) from Xenopus borealis (Kenyan clawed frog).